Consider the following 601-residue polypeptide: Glutathione-regulated potassium-efflux system protein KefB (601 aa).

13 helical membrane-spanning segments follow: residues 4–24 (ADLLTAGVLFLFAAVAAVPLA), 29–49 (IGAVLGYLLAGIAIGPWGLGF), 55–75 (EILHFSELGVVFLMFIIGLEL), 87–107 (IFGVGAAQVLLSAAVLAGLLM), 111–131 (FLWQAAVVGGIGLAMSSTAMA), 152–172 (VLLFQDLAVIPALALVPLLAG), 177–197 (HFDWFKVAMKVLAFAVMLIGG), 207–227 (FIAASGVREVFTAATLLLVLS), 230–250 (LFMDALGLSMALGTFIAGVLL), 262–282 (AIDPFKGLLLGLFFISVGMSL), 284–304 (LGVLYTHLLWVAASVVILVVI), 324–344 (MQFASVLSQGGEFAFVLFSTA), and 356–376 (ALLLVTVTLSMMTTPLLMKGI). The RCK N-terminal domain occupies 400–519 (KPQVIVVGFG…AGVTQFSRET (120 aa)).

It belongs to the monovalent cation:proton antiporter 2 (CPA2) transporter (TC 2.A.37) family. KefB subfamily. As to quaternary structure, interacts with the regulatory subunit KefG.

The protein resides in the cell inner membrane. In terms of biological role, pore-forming subunit of a potassium efflux system that confers protection against electrophiles. Catalyzes K(+)/H(+) antiport. This is Glutathione-regulated potassium-efflux system protein KefB from Salmonella paratyphi B (strain ATCC BAA-1250 / SPB7).